Consider the following 267-residue polypeptide: Ribosomal RNA small subunit methyltransferase A (267 aa).

The S-adenosyl-L-methionine site is built by asparagine 12, isoleucine 14, glycine 39, glutamate 60, aspartate 84, and asparagine 110.

This sequence belongs to the class I-like SAM-binding methyltransferase superfamily. rRNA adenine N(6)-methyltransferase family. RsmA subfamily.

The protein localises to the cytoplasm. It carries out the reaction adenosine(1518)/adenosine(1519) in 16S rRNA + 4 S-adenosyl-L-methionine = N(6)-dimethyladenosine(1518)/N(6)-dimethyladenosine(1519) in 16S rRNA + 4 S-adenosyl-L-homocysteine + 4 H(+). Specifically dimethylates two adjacent adenosines (A1518 and A1519) in the loop of a conserved hairpin near the 3'-end of 16S rRNA in the 30S particle. May play a critical role in biogenesis of 30S subunits. The chain is Ribosomal RNA small subunit methyltransferase A from Mesoplasma florum (strain ATCC 33453 / NBRC 100688 / NCTC 11704 / L1) (Acholeplasma florum).